Reading from the N-terminus, the 123-residue chain is Small ribosomal subunit protein uS12 (123 aa).

Residues 1–21 (MPTIEQLVRKGRQAKPKKSKT) form a disordered region. Residues 9–20 (RKGRQAKPKKSK) show a composition bias toward basic residues. Position 89 is a 3-methylthioaspartic acid (D89).

It belongs to the universal ribosomal protein uS12 family. Part of the 30S ribosomal subunit. Contacts proteins S8 and S17. May interact with IF1 in the 30S initiation complex.

Functionally, with S4 and S5 plays an important role in translational accuracy. Interacts with and stabilizes bases of the 16S rRNA that are involved in tRNA selection in the A site and with the mRNA backbone. Located at the interface of the 30S and 50S subunits, it traverses the body of the 30S subunit contacting proteins on the other side and probably holding the rRNA structure together. The combined cluster of proteins S8, S12 and S17 appears to hold together the shoulder and platform of the 30S subunit. This Bifidobacterium adolescentis (strain ATCC 15703 / DSM 20083 / NCTC 11814 / E194a) protein is Small ribosomal subunit protein uS12.